Here is a 377-residue protein sequence, read N- to C-terminus: Homoserine O-acetyltransferase (377 aa).

Positions 47–355 (NAILICHALT…DYGHDAFLLE (309 aa)) constitute an AB hydrolase-1 domain. Ser-153 functions as the Nucleophile in the catalytic mechanism. Residue Arg-222 coordinates substrate. Residues Asp-316 and His-349 contribute to the active site. Asp-350 contacts substrate.

Belongs to the AB hydrolase superfamily. MetX family. As to quaternary structure, homodimer.

Its subcellular location is the cytoplasm. The catalysed reaction is L-homoserine + acetyl-CoA = O-acetyl-L-homoserine + CoA. It functions in the pathway amino-acid biosynthesis; L-methionine biosynthesis via de novo pathway; O-acetyl-L-homoserine from L-homoserine: step 1/1. In terms of biological role, transfers an acetyl group from acetyl-CoA to L-homoserine, forming acetyl-L-homoserine. The sequence is that of Homoserine O-acetyltransferase from Deferribacter desulfuricans (strain DSM 14783 / JCM 11476 / NBRC 101012 / SSM1).